A 118-amino-acid chain; its full sequence is D-dopachrome decarboxylase (118 aa).

Position 2 is an N-acetylproline (Pro2).

The protein belongs to the MIF family. Homotrimer.

The protein resides in the cytoplasm. The catalysed reaction is D-dopachrome + H(+) = 5,6-dihydroxyindole + CO2. Its function is as follows. Tautomerization of D-dopachrome with decarboxylation to give 5,6-dihydroxyindole (DHI). The sequence is that of D-dopachrome decarboxylase (DDT) from Gallus gallus (Chicken).